Consider the following 360-residue polypeptide: D-alanine--D-alanine ligase (360 aa).

The region spanning 139–344 (KDVFAQAGLA…YPELIEKLVS (206 aa)) is the ATP-grasp domain. 172–227 (EQVLGYPCFVKPANMGSSVGISKCRSKEELQTAFDLAFQYDRRVVVEEGVVGREIE) lines the ATP pocket. Residues D298, E311, and N313 each contribute to the Mg(2+) site.

This sequence belongs to the D-alanine--D-alanine ligase family. Requires Mg(2+) as cofactor. Mn(2+) is required as a cofactor.

It localises to the cytoplasm. The catalysed reaction is 2 D-alanine + ATP = D-alanyl-D-alanine + ADP + phosphate + H(+). The protein operates within cell wall biogenesis; peptidoglycan biosynthesis. Its function is as follows. Cell wall formation. This Bacillus pumilus (strain SAFR-032) protein is D-alanine--D-alanine ligase.